Here is a 307-residue protein sequence, read N- to C-terminus: HPr kinase/phosphorylase (307 aa).

Active-site residues include H136 and K157. Residue 151–158 (GESGIGKS) coordinates ATP. S158 serves as a coordination point for Mg(2+). The Proton acceptor; for phosphorylation activity. Proton donor; for dephosphorylation activity role is filled by D175. An important for the catalytic mechanism of both phosphorylation and dephosphorylation region spans residues 198–207 (LEVRGMGIID). E199 is a binding site for Mg(2+). Residue R240 is part of the active site. Residues 261-266 (PIRPGR) are important for the catalytic mechanism of dephosphorylation.

It belongs to the HPrK/P family. Homohexamer. Mg(2+) is required as a cofactor.

It carries out the reaction [HPr protein]-L-serine + ATP = [HPr protein]-O-phospho-L-serine + ADP + H(+). The catalysed reaction is [HPr protein]-O-phospho-L-serine + phosphate + H(+) = [HPr protein]-L-serine + diphosphate. Catalyzes the ATP- as well as the pyrophosphate-dependent phosphorylation of a specific serine residue in HPr, a phosphocarrier protein of the phosphoenolpyruvate-dependent sugar phosphotransferase system (PTS). HprK/P also catalyzes the pyrophosphate-producing, inorganic phosphate-dependent dephosphorylation (phosphorolysis) of seryl-phosphorylated HPr (P-Ser-HPr). The two antagonistic activities of HprK/P are regulated by several intracellular metabolites, which change their concentration in response to the absence or presence of rapidly metabolisable carbon sources (glucose, fructose, etc.) in the growth medium. Therefore, by controlling the phosphorylation state of HPr, HPrK/P is a sensor enzyme that plays a major role in the regulation of carbon metabolism and sugar transport: it mediates carbon catabolite repression (CCR), and regulates PTS-catalyzed carbohydrate uptake and inducer exclusion. The polypeptide is HPr kinase/phosphorylase (Clostridium perfringens (strain 13 / Type A)).